Reading from the N-terminus, the 221-residue chain is 3-dehydroquinate dehydratase (221 aa).

3-dehydroquinate-binding positions include Glu-33–Arg-35 and Arg-63. Residue His-118 is the Proton donor/acceptor of the active site. Lys-144 acts as the Schiff-base intermediate with substrate in catalysis. 3-dehydroquinate-binding residues include Arg-181, Thr-200, and Gln-204.

It belongs to the type-I 3-dehydroquinase family. As to quaternary structure, homodimer.

It carries out the reaction 3-dehydroquinate = 3-dehydroshikimate + H2O. It functions in the pathway metabolic intermediate biosynthesis; chorismate biosynthesis; chorismate from D-erythrose 4-phosphate and phosphoenolpyruvate: step 3/7. Its function is as follows. Involved in the third step of the chorismate pathway, which leads to the biosynthesis of aromatic amino acids. Catalyzes the cis-dehydration of 3-dehydroquinate (DHQ) and introduces the first double bond of the aromatic ring to yield 3-dehydroshikimate. This chain is 3-dehydroquinate dehydratase, found in Methanothermobacter thermautotrophicus (strain ATCC 29096 / DSM 1053 / JCM 10044 / NBRC 100330 / Delta H) (Methanobacterium thermoautotrophicum).